The primary structure comprises 282 residues: Transcription factor LBX1 (282 aa).

The segment covering 1–20 (MTSKEDGKAAPGEERRRSPL) has biased composition (basic and acidic residues). A disordered region spans residues 1–36 (MTSKEDGKAAPGEERRRSPLDHLPPPANSNKPLTPF). Positions 125 to 184 (RRKSRTAFTNHQIYELEKRFLYQKYLSPADRDQIAQQLGLTNAQVITWFQNRRAKLKRDL) form a DNA-binding region, homeobox. A disordered region spans residues 210 to 282 (ELEQNSEASG…EEDEEIDVDD (73 aa)). Gly residues predominate over residues 218–227 (SGGGGGGGCG). Over residues 269–282 (CSEDEEDEEIDVDD) the composition is skewed to acidic residues.

As to quaternary structure, interacts with SKOR1 which acts as a transcriptional corepressor. Expressed in the dorsal part of the spinal cord and hindbrain and in presumptive myogenic cells in lateral regions of differentiating somites.

The protein resides in the nucleus. Functionally, transcription factor required for the development of GABAergic interneurons in the dorsal horn of the spinal cord and migration and further development of hypaxial muscle precursor cells for limb muscles, diaphragm and hypoglossal cord. This is Transcription factor LBX1 (Lbx1) from Mus musculus (Mouse).